Consider the following 275-residue polypeptide: Formamidopyrimidine-DNA glycosylase (275 aa).

Catalysis depends on proline 2, which acts as the Schiff-base intermediate with DNA. Glutamate 3 functions as the Proton donor in the catalytic mechanism. Catalysis depends on lysine 58, which acts as the Proton donor; for beta-elimination activity. DNA-binding residues include histidine 92, arginine 111, and arginine 154. The segment at 239-273 (HVYHRQGLPCQRCGTPIERIKVAQRGTHFCPHCQV) adopts an FPG-type zinc-finger fold. Arginine 263 acts as the Proton donor; for delta-elimination activity in catalysis.

It belongs to the FPG family. In terms of assembly, monomer. Zn(2+) serves as cofactor.

The catalysed reaction is Hydrolysis of DNA containing ring-opened 7-methylguanine residues, releasing 2,6-diamino-4-hydroxy-5-(N-methyl)formamidopyrimidine.. It catalyses the reaction 2'-deoxyribonucleotide-(2'-deoxyribose 5'-phosphate)-2'-deoxyribonucleotide-DNA = a 3'-end 2'-deoxyribonucleotide-(2,3-dehydro-2,3-deoxyribose 5'-phosphate)-DNA + a 5'-end 5'-phospho-2'-deoxyribonucleoside-DNA + H(+). Functionally, involved in base excision repair of DNA damaged by oxidation or by mutagenic agents. Acts as a DNA glycosylase that recognizes and removes damaged bases. Has a preference for oxidized purines, such as 7,8-dihydro-8-oxoguanine (8-oxoG). Has AP (apurinic/apyrimidinic) lyase activity and introduces nicks in the DNA strand. Cleaves the DNA backbone by beta-delta elimination to generate a single-strand break at the site of the removed base with both 3'- and 5'-phosphates. The protein is Formamidopyrimidine-DNA glycosylase of Pediococcus pentosaceus (strain ATCC 25745 / CCUG 21536 / LMG 10740 / 183-1w).